Here is a 388-residue protein sequence, read N- to C-terminus: Diacylglycerol O-acyltransferase 2 (388 aa).

At 1-69 (MKTLIAAYSG…NRSKVEKQLQ (69 aa)) the chain is on the cytoplasmic side. The segment at 16–40 (RQAEADRSQRSHGGPALSREGSGRW) is disordered. The helical transmembrane segment at 70-88 (VISVLQWVLSFLVLGVACS) threads the bilayer. Residues 89 to 92 (AILM) lie on the Lumenal side of the membrane. Residues 93–112 (YIFCTDCWLIAVLYFTWLVF) form a helical membrane-spanning segment. The Cytoplasmic segment spans residues 113–388 (DWNTPKKGGR…LPETEVLEVN (276 aa)).

It belongs to the diacylglycerol acyltransferase family. As to quaternary structure, forms multimeric complexes consisting of several DGAT2 subunits. Interacts with SLC27A1 and this interaction is enhanced in the presence of ZFYVE1. As to expression, predominantly expressed in liver and white adipose tissue. Expressed at lower level in mammary gland, testis and peripheral blood leukocytes. Expressed in sebaceous glands of normal skin but decreased psoriatic skin.

The protein localises to the endoplasmic reticulum membrane. The protein resides in the lipid droplet. Its subcellular location is the cytoplasm. It is found in the perinuclear region. It carries out the reaction an acyl-CoA + a 1,2-diacyl-sn-glycerol = a triacyl-sn-glycerol + CoA. It catalyses the reaction all-trans-retinol + an acyl-CoA = an all-trans-retinyl ester + CoA. The enzyme catalyses 2-(9Z-octadecenoyl)-glycerol + (9Z)-octadecenoyl-CoA = 1,2-di-(9Z-octadecenoyl)-sn-glycerol + CoA. The catalysed reaction is 1,2-di-(9Z-octadecenoyl)-sn-glycerol + (9Z)-octadecenoyl-CoA = 1,2,3-tri-(9Z-octadecenoyl)-glycerol + CoA. It carries out the reaction all-trans-retinol + hexadecanoyl-CoA = all-trans-retinyl hexadecanoate + CoA. It catalyses the reaction 1-O-(9Z-octadecenyl)-glycerol + (9Z)-octadecenoyl-CoA = 1-O-(9Z-octadecyl)-3-(9Z-octadecenoyl)-glycerol + CoA. The enzyme catalyses 1-(9Z-octadecenoyl)-glycerol + (9Z)-octadecenoyl-CoA = 1,2-di-(9Z-octadecenoyl)-glycerol + CoA. The catalysed reaction is 1,2-di-(9Z-octadecenoyl)-sn-glycerol + hexadecanoyl-CoA = 1,2-di-(9Z)-octadecenoyl-3-hexadecanoyl-sn-glycerol + CoA. It carries out the reaction 1,3-di-(9Z-octadecenoyl)-glycerol + (9Z)-octadecenoyl-CoA = 1,2,3-tri-(9Z-octadecenoyl)-glycerol + CoA. It catalyses the reaction 2,3-di-(9Z)-octadecenoyl-sn-glycerol + (9Z)-octadecenoyl-CoA = 1,2,3-tri-(9Z-octadecenoyl)-glycerol + CoA. The enzyme catalyses 2-(9Z-octadecenoyl)-glycerol + hexadecanoyl-CoA = 1-hexadecanoyl-2-(9Z-octadecenoyl)-sn-glycerol + CoA. Its pathway is glycerolipid metabolism; triacylglycerol biosynthesis. Inhibited by niacin. Essential acyltransferase that catalyzes the terminal and only committed step in triacylglycerol synthesis by using diacylglycerol and fatty acyl CoA as substrates. Required for synthesis and storage of intracellular triglycerides. Probably plays a central role in cytosolic lipid accumulation. In liver, is primarily responsible for incorporating endogenously synthesized fatty acids into triglycerides. Also functions as an acyl-CoA retinol acyltransferase (ARAT). Also able to use 1-monoalkylglycerol (1-MAkG) as an acyl acceptor for the synthesis of monoalkyl-monoacylglycerol (MAMAG). This chain is Diacylglycerol O-acyltransferase 2, found in Homo sapiens (Human).